Consider the following 217-residue polypeptide: Large ribosomal subunit protein uL1 (217 aa).

Belongs to the universal ribosomal protein uL1 family. In terms of assembly, part of the 50S ribosomal subunit.

In terms of biological role, binds directly to 23S rRNA. Probably involved in E site tRNA release. Protein L1 is also a translational repressor protein, it controls the translation of its operon by binding to its mRNA. This chain is Large ribosomal subunit protein uL1, found in Hyperthermus butylicus (strain DSM 5456 / JCM 9403 / PLM1-5).